A 389-amino-acid chain; its full sequence is Cytochrome b (389 aa).

8 helical membrane-spanning segments follow: residues 32 to 52 (FGFF…LLAM), 76 to 98 (WLLR…IHML), 113 to 133 (LWVS…LGYV), 179 to 199 (FFSL…LHII), 225 to 245 (FTIK…TFVF), 290 to 310 (LGVL…FLTI), 325 to 345 (LFWS…QPAA), and 353 to 373 (LYST…IYIV). The heme b site is built by His82 and His96. Heme b-binding residues include His183 and His197.

The protein belongs to the cytochrome b family. As to quaternary structure, the main subunits of complex b-c1 are: cytochrome b, cytochrome c1 and the Rieske protein. Heme b is required as a cofactor.

Its subcellular location is the mitochondrion inner membrane. In terms of biological role, component of the ubiquinol-cytochrome c reductase complex (complex III or cytochrome b-c1 complex) that is part of the mitochondrial respiratory chain. The b-c1 complex mediates electron transfer from ubiquinol to cytochrome c. Contributes to the generation of a proton gradient across the mitochondrial membrane that is then used for ATP synthesis. In Dictyostelium discoideum (Social amoeba), this protein is Cytochrome b (cytB).